A 426-amino-acid polypeptide reads, in one-letter code: uncharacterized protein (426 aa).

This is an uncharacterized protein from Corynebacterium glutamicum (strain ATCC 13032 / DSM 20300 / JCM 1318 / BCRC 11384 / CCUG 27702 / LMG 3730 / NBRC 12168 / NCIMB 10025 / NRRL B-2784 / 534).